The sequence spans 245 residues: Enolase-phosphatase E1 (245 aa).

This sequence belongs to the HAD-like hydrolase superfamily. MasA/MtnC family. As to quaternary structure, monomer. The cofactor is Mg(2+).

The catalysed reaction is 5-methylsulfanyl-2,3-dioxopentyl phosphate + H2O = 1,2-dihydroxy-5-(methylsulfanyl)pent-1-en-3-one + phosphate. It participates in amino-acid biosynthesis; L-methionine biosynthesis via salvage pathway; L-methionine from S-methyl-5-thio-alpha-D-ribose 1-phosphate: step 3/6. The protein operates within amino-acid biosynthesis; L-methionine biosynthesis via salvage pathway; L-methionine from S-methyl-5-thio-alpha-D-ribose 1-phosphate: step 4/6. Functionally, bifunctional enzyme that catalyzes the enolization of 2,3-diketo-5-methylthiopentyl-1-phosphate (DK-MTP-1-P) into the intermediate 2-hydroxy-3-keto-5-methylthiopentenyl-1-phosphate (HK-MTPenyl-1-P), which is then dephosphorylated to form the acireductone 1,2-dihydroxy-3-keto-5-methylthiopentene (DHK-MTPene). The chain is Enolase-phosphatase E1 from Synechococcus sp. (strain CC9902).